Here is a 249-residue protein sequence, read N- to C-terminus: Triosephosphate isomerase (249 aa).

A substrate-binding site is contributed by asparagine 9 to lysine 11. Histidine 94 acts as the Electrophile in catalysis. Glutamate 166 (proton acceptor) is an active-site residue. Substrate is bound by residues glycine 172 and glycine 232–glycine 233.

It belongs to the triosephosphate isomerase family. In terms of assembly, homodimer.

The protein resides in the cytoplasm. It catalyses the reaction D-glyceraldehyde 3-phosphate = dihydroxyacetone phosphate. It functions in the pathway carbohydrate biosynthesis; gluconeogenesis. Its pathway is carbohydrate degradation; glycolysis; D-glyceraldehyde 3-phosphate from glycerone phosphate: step 1/1. Its function is as follows. Involved in the gluconeogenesis. Catalyzes stereospecifically the conversion of dihydroxyacetone phosphate (DHAP) to D-glyceraldehyde-3-phosphate (G3P). This chain is Triosephosphate isomerase, found in Xylella fastidiosa (strain M23).